The following is a 450-amino-acid chain: Tubulin beta-3 chain (450 aa).

The MREI motif signature appears at 1–4 (MREI). 4 residues coordinate GDP: glycine 10, glutamine 11, cysteine 12, and glutamine 15. GTP is bound at residue glutamine 11. Glutamate 69 serves as a coordination point for GTP. Glutamate 69 lines the Mg(2+) pocket. Asparagine 99, serine 138, glycine 142, threonine 143, and glycine 144 together coordinate GDP. Residues serine 138, glycine 142, threonine 143, and glycine 144 each coordinate GTP. Serine 172 bears the Phosphoserine; by CDK1 mark. 4 residues coordinate GDP: aspartate 177, asparagine 204, tyrosine 222, and asparagine 226. Asparagine 204 contributes to the GTP binding site. Residue asparagine 226 coordinates GTP. The disordered stretch occupies residues 425-450 (YQDATAEEEGEMYEDDEEESEAQGPK). Residues 429–450 (TAEEEGEMYEDDEEESEAQGPK) are compositionally biased toward acidic residues. Glutamate 438 bears the 5-glutamyl polyglutamate mark. The residue at position 444 (serine 444) is a Phosphoserine.

This sequence belongs to the tubulin family. Heterodimer of alpha- and beta-tubulin. A typical microtubule is a hollow water-filled tube with an outer diameter of 25 nm and an inner diameter of 15 nM. Alpha-beta heterodimers associate head-to-tail to form protofilaments running lengthwise along the microtubule wall with the beta-tubulin subunit facing the microtubule plus end conferring a structural polarity. Microtubules usually have 13 protofilaments but different protofilament numbers can be found in some organisms and specialized cells. Interacts with gamma-tubulin; the interaction allows microtubules to nucleate from the gamma-tubulin ring complex (gTuRC). Interacts with UNC5C (via cytoplasmic domain); this interaction is decreased by NTN1/Netrin-1. Interacts with NLRP5/MATER at cytoskeleton microtubules. Interacts with DPYSL5. Interacts with CFAP61. It depends on Mg(2+) as a cofactor. Some glutamate residues at the C-terminus are polyglutamylated, resulting in polyglutamate chains on the gamma-carboxyl group. Polyglutamylation plays a key role in microtubule severing by spastin (SPAST). SPAST preferentially recognizes and acts on microtubules decorated with short polyglutamate tails: severing activity by SPAST increases as the number of glutamates per tubulin rises from one to eight, but decreases beyond this glutamylation threshold. Glutamylation is also involved in cilia motility. In terms of processing, some glutamate residues at the C-terminus are monoglycylated but not polyglycylated due to the absence of functional TTLL10 in human. Monoglycylation is mainly limited to tubulin incorporated into cilia and flagella axonemes, which is required for their stability and maintenance. Flagella glycylation controls sperm motility. Both polyglutamylation and monoglycylation can coexist on the same protein on adjacent residues, and lowering glycylation levels increases polyglutamylation, and reciprocally. Post-translationally, phosphorylated on Ser-172 by CDK1 during the cell cycle, from metaphase to telophase, but not in interphase. This phosphorylation inhibits tubulin incorporation into microtubules. Expression is primarily restricted to central and peripheral nervous system. Greatly increased expression in most cancerous tissues.

The protein resides in the cytoplasm. It is found in the cytoskeleton. The protein localises to the cell projection. It localises to the growth cone. Its subcellular location is the lamellipodium. The protein resides in the filopodium. Its function is as follows. Tubulin is the major constituent of microtubules, protein filaments consisting of alpha- and beta-tubulin heterodimers. Microtubules grow by the addition of GTP-tubulin dimers to the microtubule end, where a stabilizing cap forms. Below the cap, alpha-beta tubulin heterodimers are in GDP-bound state, owing to GTPase activity of alpha-tubulin. TUBB3 plays a critical role in proper axon guidance and maintenance. Binding of NTN1/Netrin-1 to its receptor UNC5C might cause dissociation of UNC5C from polymerized TUBB3 in microtubules and thereby lead to increased microtubule dynamics and axon repulsion. Plays a role in dorsal root ganglion axon projection towards the spinal cord. The protein is Tubulin beta-3 chain (TUBB3) of Homo sapiens (Human).